Reading from the N-terminus, the 386-residue chain is Aspergillopepsin-1 (386 aa).

An N-terminal signal peptide occupies residues Met1–Ala20. A propeptide spans Met21–Met69 (activation peptide). The Peptidase A1 domain occupies Tyr85–Ala383. Residue Asp101 is part of the active site. Asn130 is a glycosylation site (N-linked (GlcNAc...) asparagine). Asp275 is an active-site residue. Cys311 and Cys346 are disulfide-bonded.

Belongs to the peptidase A1 family. In terms of assembly, monomer.

It is found in the secreted. It carries out the reaction Hydrolysis of proteins with broad specificity. Generally favors hydrophobic residues in P1 and P1', but also accepts Lys in P1, which leads to activation of trypsinogen. Does not clot milk.. Secreted aspartic endopeptidase that allows assimilation of proteinaceous substrates. The scissile peptide bond is attacked by a nucleophilic water molecule activated by two aspartic residues in the active site. Shows a broad primary substrate specificity. Favors hydrophobic residues at the P1 and P1' positions, but also accepts a lysine residue in the P1 position, leading to the activation of trypsinogen and chymotrypsinogen A. The chain is Aspergillopepsin-1 from Emericella nidulans (strain FGSC A4 / ATCC 38163 / CBS 112.46 / NRRL 194 / M139) (Aspergillus nidulans).